Reading from the N-terminus, the 177-residue chain is Large ribosomal subunit protein uL6 (177 aa).

Belongs to the universal ribosomal protein uL6 family. Part of the 50S ribosomal subunit.

Functionally, this protein binds to the 23S rRNA, and is important in its secondary structure. It is located near the subunit interface in the base of the L7/L12 stalk, and near the tRNA binding site of the peptidyltransferase center. The chain is Large ribosomal subunit protein uL6 from Saccharophagus degradans (strain 2-40 / ATCC 43961 / DSM 17024).